The following is a 259-amino-acid chain: UPF0246 protein PputGB1_4560 (259 aa).

It belongs to the UPF0246 family.

The chain is UPF0246 protein PputGB1_4560 from Pseudomonas putida (strain GB-1).